Reading from the N-terminus, the 375-residue chain is ATP-sensitive inward rectifier potassium channel 15 (375 aa).

At 1–60 (MDAIHIGMSSTPLVKHTAGAGLKANRPRVMSKSGHSNVRIDKVDGIYLLYLQDLWTTVID) the chain is on the cytoplasmic side. Residues 61–87 (MKWRYKLTLFAATFVMTWFLFGVIYYA) form a helical membrane-spanning segment. At 88 to 113 (IAFIHGDLEPGEPISNHTPCIMKVDS) the chain is on the extracellular side. The segment at residues 114-130 (LTGAFLFSLESQTTIGY) is an intramembrane region (helical; Pore-forming). A Selectivity filter motif is present at residues 127–132 (TIGYGV). Residues 131 to 139 (GVRSITEEC) are Extracellular-facing. Residues 140–165 (PHAIFLLVAQLVITTLIEIFITGTFL) form a helical membrane-spanning segment. Residues 166-375 (AKIARPKKRA…RTLLLQQSNV (210 aa)) lie on the Cytoplasmic side of the membrane.

It belongs to the inward rectifier-type potassium channel (TC 1.A.2.1) family. KCNJ15 subfamily. Can form heteromultimeric channels with Kir5.1/KCNJ16. Interacts with PATJ.

The protein localises to the membrane. The protein resides in the cell membrane. It carries out the reaction K(+)(in) = K(+)(out). Its activity is regulated as follows. Channel activity is regulated by variations of cytosolic pH; reversibly inhibited by acidic pH values. Inhibited by Ba(2+) and Cs(+) in a voltage-dependent manner. Functionally, inward rectifier potassium channels are characterized by a greater tendency to allow potassium to flow into the cell rather than out of it. Their voltage dependence is regulated by the concentration of extracellular potassium; as external potassium is raised, the voltage range of the channel opening shifts to more positive voltages. The inward rectification is mainly due to the blockage of outward current by internal magnesium. The chain is ATP-sensitive inward rectifier potassium channel 15 (KCNJ15) from Homo sapiens (Human).